The sequence spans 72 residues: Large ribosomal subunit protein bL31 (72 aa).

Zn(2+) contacts are provided by Cys16, Cys18, Cys38, and Cys41.

This sequence belongs to the bacterial ribosomal protein bL31 family. Type A subfamily. As to quaternary structure, part of the 50S ribosomal subunit. The cofactor is Zn(2+).

Its function is as follows. Binds the 23S rRNA. This chain is Large ribosomal subunit protein bL31, found in Vibrio campbellii (strain ATCC BAA-1116).